We begin with the raw amino-acid sequence, 445 residues long: Chromosome partition protein MukF (445 aa).

The interval 213 to 241 is leucine-zipper; the sequence is LSETSNTLKELQDTLQAAGDELQTQILDI.

Belongs to the MukF family. In terms of assembly, interacts, and probably forms a ternary complex, with MukE and MukB via its C-terminal region. The complex formation is stimulated by calcium or magnesium. It is required for an interaction between MukE and MukB.

Its subcellular location is the cytoplasm. It is found in the nucleoid. Its function is as follows. Involved in chromosome condensation, segregation and cell cycle progression. May participate in facilitating chromosome segregation by condensation DNA from both sides of a centrally located replisome during cell division. Not required for mini-F plasmid partitioning. Probably acts via its interaction with MukB and MukE. Overexpression results in anucleate cells. It has a calcium binding activity. The polypeptide is Chromosome partition protein MukF (Vibrio vulnificus (strain CMCP6)).